Reading from the N-terminus, the 393-residue chain is Cytohesin-4 (393 aa).

Residues 13 to 56 (SGEAKELQQIKWHRKQLLEDIQKLKDEIADVFAQIDCFESTEES) adopt a coiled-coil conformation. The 188-residue stretch at 54 to 241 (EESRMAQKEK…RNLFDSIKSE (188 aa)) folds into the SEC7 domain. The region spanning 259–375 (NPDREGWLLK…WIEAIRASIT (117 aa)) is the PH domain. Residues 268 to 275 (KLGGRVKT), arginine 279, tyrosine 290, and arginine 300 contribute to the a 1,2-diacyl-sn-glycero-3-phospho-(1D-myo-inositol-3,4,5-trisphosphate) site. A C-terminal autoinhibitory region region spans residues 386–393 (RKKKIVGK).

Its subcellular location is the cell membrane. Functionally, promotes guanine-nucleotide exchange on ARF1 and ARF5. Promotes the activation of ARF factors through replacement of GDP with GTP. This Mus musculus (Mouse) protein is Cytohesin-4 (Cyth4).